Reading from the N-terminus, the 531-residue chain is Pescadillo homolog (531 aa).

In terms of domain architecture, BRCT spans 309–398; it reads SIKTMFKGCV…RKLPTERYMP (90 aa).

The protein belongs to the pescadillo family.

It localises to the nucleus. The protein resides in the nucleolus. The protein localises to the nucleoplasm. In terms of biological role, required for maturation of ribosomal RNAs and formation of the large ribosomal subunit. The chain is Pescadillo homolog from Caenorhabditis elegans.